The chain runs to 230 residues: LexA repressor (230 aa).

The H-T-H motif DNA-binding region spans 28–48; it reads IREIGEALDIRSTNGVNDHLK. Residues Ser148 and Lys185 each act as for autocatalytic cleavage activity in the active site.

This sequence belongs to the peptidase S24 family. As to quaternary structure, homodimer.

The catalysed reaction is Hydrolysis of Ala-|-Gly bond in repressor LexA.. Represses a number of genes involved in the response to DNA damage (SOS response), including recA and lexA. In the presence of single-stranded DNA, RecA interacts with LexA causing an autocatalytic cleavage which disrupts the DNA-binding part of LexA, leading to derepression of the SOS regulon and eventually DNA repair. The polypeptide is LexA repressor (Anaeromyxobacter sp. (strain K)).